Reading from the N-terminus, the 185-residue chain is Translation initiation factor IF-3 (185 aa).

The protein belongs to the IF-3 family. In terms of assembly, monomer.

Its subcellular location is the cytoplasm. Its function is as follows. IF-3 binds to the 30S ribosomal subunit and shifts the equilibrium between 70S ribosomes and their 50S and 30S subunits in favor of the free subunits, thus enhancing the availability of 30S subunits on which protein synthesis initiation begins. The chain is Translation initiation factor IF-3 from Rickettsia prowazekii (strain Madrid E).